The primary structure comprises 1926 residues: Rho GTPase-activating protein 21-A (1926 aa).

The tract at residues 1–41 is disordered; sequence MATRRAIVPEQQQEPSSPASEISKNKDGQEQSEMVSPMEEE. The segment covering 10 to 22 has biased composition (polar residues); the sequence is EQQQEPSSPASEI. Residues 77–162 enclose the PDZ domain; sequence HTSIKDEENG…TLELSVMPKD (86 aa). 6 disordered regions span residues 211–236, 353–378, 416–487, 571–592, 640–704, and 868–905; these read VEVP…TTQP, PTAQ…QIDW, TDYN…RSES, QPTR…DRSG, FQRK…DSDA, and GKLG…DVFS. Composition is skewed to polar residues over residues 216–236, 353–372, and 416–429; these read SGTS…TTQP, PTAQ…SPGP, and TDYN…FSGQ. The span at 441–451 shows a compositional bias: low complexity; sequence QQSVQMRQRSV. The segment covering 452 to 466 has biased composition (basic and acidic residues); the sequence is SQERLEDPVLMKEWP. A compositionally biased stretch (polar residues) spans 468 to 479; sequence SASQDTLSSAVA. Residues 640–669 show a composition bias toward polar residues; that stretch reads FQRKTQTESASGFQLDSVKTSMSASSSPPA. Positions 906-1019 constitute a PH domain; the sequence is DSNKEGFLYF…WIKAIQENGN (114 aa). Positions 1044-1064 are enriched in polar residues; it reads MSSASNKSEQSPKAPRQTLSI. The tract at residues 1044–1107 is disordered; that stretch reads MSSASNKSEQ…SPPKDKGSWR (64 aa). Basic and acidic residues predominate over residues 1083-1105; the sequence is PKQESERRLFSKDDISPPKDKGS. The region spanning 1126-1318 is the Rho-GAP domain; that stretch reads VRLDDCPPAH…TLIQKHDWFF (193 aa). 6 disordered regions span residues 1330–1381, 1396–1416, 1512–1540, 1573–1598, 1626–1658, and 1827–1915; these read VHEE…SGKD, ASRK…EDEL, QMEE…PKVV, LDPN…DERS, RQHR…TPRL, and STSE…LSGT. Residues 1512–1534 are compositionally biased toward polar residues; that stretch reads QMEESMSDSGTMLSNSSQASAQR. Polar residues-rich tracts occupy residues 1639 to 1653 and 1866 to 1902; these read VQAN…TEGS and TADI…NNFS.

The protein resides in the golgi apparatus membrane. The protein localises to the cell junction. It is found in the cytoplasmic vesicle membrane. It localises to the cytoplasm. Its subcellular location is the cytoskeleton. Its function is as follows. GTPase-activating protein (GAP) for rhoa and cdc42. The polypeptide is Rho GTPase-activating protein 21-A (arhgap21-a) (Xenopus laevis (African clawed frog)).